We begin with the raw amino-acid sequence, 424 residues long: Spermatogenesis-associated protein 2-like protein (424 aa).

Disordered stretches follow at residues 233–258 (EDEG…AELA) and 273–300 (TGGR…EEGL). Ser327 bears the Phosphoserine mark.

It belongs to the SPATA2 family.

This Homo sapiens (Human) protein is Spermatogenesis-associated protein 2-like protein.